Consider the following 2273-residue polypeptide: Nonribosomal peptide synthetase hasD (2273 aa).

The tract at residues F100–F446 is adenylation 1. The Carrier 1 domain maps to E588–S664. At S625 the chain carries O-(pantetheine 4'-phosphoryl)serine. Residues I696–N1120 are condensation 1. The segment at E1156 to L1487 is adenylation 2. A Carrier 2 domain is found at D1634 to V1714. S1673 carries the O-(pantetheine 4'-phosphoryl)serine modification. The condensation 2 stretch occupies residues G1735 to D2127. The disordered stretch occupies residues P2174–Q2200. Residues E2186 to Q2200 are compositionally biased toward polar residues. Residues Q2201–I2273 enclose the Carrier 3 domain. At S2235 the chain carries O-(pantetheine 4'-phosphoryl)serine.

It belongs to the NRP synthetase family. The cofactor is pantetheine 4'-phosphate.

The protein operates within secondary metabolite biosynthesis. Functionally, nonribosomal peptide synthetase; part of the gene cluster that mediates the biosynthesis of hexadehydro-astechrome (HAS), a tryptophan-derived iron(III)-complex that acts as a virulence factor in infected mice. Within the pathway, the NRPS condenses tryptophan and alanine to produce the Trp-Ala dipeptide. The 7-dimethylallyltryptophan synthase hasE then catalyzes the prenylation of the hasD-tethered tryptophan or the resulting tethered Trp-Ala dipeptide at the C-7 position of the indole moiety. HAS biosynthesis continues via tethered intermediates with the succesive actions of the cytochrome P450 monooxygenase hasH, the O-methyltransferase hasC, and the FAD-linked oxidoreductase hasG. The resulting O-methylated diketopiperazine is then released from hasD. Finally, three O-methylated diketopiperazine molecules assemble in a trimeric complex with Fe(III) to produce hexadehydro-astechrome. The sequence is that of Nonribosomal peptide synthetase hasD from Aspergillus fumigatus (strain CBS 144.89 / FGSC A1163 / CEA10) (Neosartorya fumigata).